Reading from the N-terminus, the 165-residue chain is Polcalcin Cup a 4 (165 aa).

EF-hand domains are found at residues glutamine 22–glutamate 57, valine 58–leucine 86, alanine 91–proline 126, and cysteine 127–aspartate 162. Positions 35, 37, 39, 41, 46, 71, 73, 75, 77, 82, 104, 106, 108, 110, 115, 140, 142, 144, and 151 each coordinate Ca(2+).

As to quaternary structure, may exist as monomer and dimer. In terms of tissue distribution, expressed in mature pollen grains.

The chain is Polcalcin Cup a 4 from Hesperocyparis arizonica (Arizona cypress).